A 314-amino-acid chain; its full sequence is PDZ domain-containing protein GIPC2 (314 aa).

The segment covering 1-12 has biased composition (basic residues); that stretch reads MPLGLRGKKKAA. Residues 1 to 36 are disordered; the sequence is MPLGLRGKKKAAKSKEAARLVEGERSSGSQGVPGPP. The span at 13-25 shows a compositional bias: basic and acidic residues; that stretch reads KSKEAARLVEGER. Residues 117-197 form the PDZ domain; sequence EVNVYKSEDS…EELFTLQLIE (81 aa).

Belongs to the GIPC family. As to quaternary structure, probably interacts with SEMA5A. As to expression, expressed in kidney and lung (at protein level).

The protein localises to the cytoplasm. The polypeptide is PDZ domain-containing protein GIPC2 (Gipc2) (Mus musculus (Mouse)).